The chain runs to 352 residues: Selenide, water dikinase (352 aa).

Residue Cys23 is part of the active site. ATP is bound by residues Lys26 and 54 to 56 (SRD). Asp57 contacts Mg(2+). ATP-binding positions include Asp74, Asp97, and 145-147 (GHS). Mg(2+) is bound at residue Asp97. Position 233 (Asp233) interacts with Mg(2+).

Belongs to the selenophosphate synthase 1 family. Class I subfamily. In terms of assembly, homodimer. The cofactor is Mg(2+).

The catalysed reaction is hydrogenselenide + ATP + H2O = selenophosphate + AMP + phosphate + 2 H(+). In terms of biological role, synthesizes selenophosphate from selenide and ATP. This chain is Selenide, water dikinase, found in Shewanella putrefaciens (strain CN-32 / ATCC BAA-453).